A 149-amino-acid chain; its full sequence is Putative glycine cleavage system H protein 3 (149 aa).

The Lipoyl-binding domain maps to 39 to 121 (TCTLGITKYA…EDKGWLIKME (83 aa)). Lys80 carries the post-translational modification N6-lipoyllysine.

This sequence belongs to the GcvH family. The glycine cleavage system is composed of four proteins: P, T, L and H. The cofactor is (R)-lipoate.

The glycine cleavage system catalyzes the degradation of glycine. The H protein shuttles the methylamine group of glycine from the P protein to the T protein. This chain is Putative glycine cleavage system H protein 3 (gcvH3), found in Dictyostelium discoideum (Social amoeba).